Consider the following 517-residue polypeptide: Aldehyde dehydrogenase X, mitochondrial (517 aa).

A mitochondrion-targeting transit peptide spans 1–17 (MLRFLAPRLLSLQGRTA). Residue K51 is modified to N6-acetyllysine. Residue K52 is modified to N6-acetyllysine; alternate. The residue at position 52 (K52) is an N6-succinyllysine; alternate. K81 bears the N6-succinyllysine mark. 262–267 (GSTEVG) is an NAD(+) binding site. E285 serves as the catalytic Proton acceptor. The active-site Nucleophile is the C319. 5 positions are modified to N6-acetyllysine; alternate: K364, K383, K399, K414, and K426. Residues K364, K383, K399, K414, and K426 each carry the N6-succinyllysine; alternate modification. At K429 the chain carries N6-acetyllysine.

It belongs to the aldehyde dehydrogenase family. In terms of assembly, homotetramer.

The protein localises to the mitochondrion matrix. The enzyme catalyses an aldehyde + NAD(+) + H2O = a carboxylate + NADH + 2 H(+). It participates in alcohol metabolism; ethanol degradation; acetate from ethanol: step 2/2. ALDHs play a major role in the detoxification of alcohol-derived acetaldehyde. They are involved in the metabolism of corticosteroids, biogenic amines, neurotransmitters, and lipid peroxidation. The protein is Aldehyde dehydrogenase X, mitochondrial (ALDH1B1) of Pongo abelii (Sumatran orangutan).